We begin with the raw amino-acid sequence, 228 residues long: L-ornithine N5-acetyltransferase NATA1 (228 aa).

The interval 1 to 21 (MAPPTAAPEPNTVPETSPTGH) is disordered. One can recognise an N-acetyltransferase domain in the interval 77–227 (VFLLEISPSP…DALQAIDKLN (151 aa)). Acetyl-CoA contacts are provided by residues 153 to 155 (IFM), 161 to 166 (RKGFGK), 192 to 195 (NVNA), and Y199.

Belongs to the acetyltransferase family.

Its function is as follows. Acetyltransferase that converts ornithine to N5-acetylornithine, which is likely used in plant defense. The sequence is that of L-ornithine N5-acetyltransferase NATA1 (NATA1) from Arabidopsis thaliana (Mouse-ear cress).